We begin with the raw amino-acid sequence, 252 residues long: F-box/SPRY domain-containing protein 1 (252 aa).

Positions 1 to 48 constitute an F-box domain; that stretch reads MVDPLCNYNVLEAIFSYLELSDLSRCSQVCKSWYHFLNDENSDVWRWH. The 193-residue stretch at 58 to 250 folds into the B30.2/SPRY domain; sequence IKSDLLASVT…VSMVYLGTPL (193 aa).

It belongs to the FBXO45/Fsn family. As to quaternary structure, component of an E3 ubiquitin ligase complex composed of hiw and Fsn.

It localises to the synapse. It functions in the pathway protein modification; protein ubiquitination. Required in the presynaptic motoneuron to down-regulate the levels of wnd and restrain synaptic terminal growth at the neuromuscular junction (NMJ). This is F-box/SPRY domain-containing protein 1 from Drosophila mojavensis (Fruit fly).